Here is a 416-residue protein sequence, read N- to C-terminus: Na(+)/H(+) antiporter NhaA (416 aa).

The next 11 helical transmembrane spans lie at 39–59, 82–102, 119–139, 146–166, 175–195, 198–218, 234–254, 281–301, 315–335, 353–373, and 390–410; these read GIVLLIAAAAALAWANSPWAA, LHFWVNDALMTVFFLVVGLEI, LPVLAALGGVAVPALLYLALV, GWAVPTATDIAFAVGVLALLG, VFLLTLAIIDDLVAVLIIALF, GGLQWPMFGIAALGLAGVLLL, AVLWWGIWQTGAHPTLAGVVL, PWVTFGVMPLFALANAGVALG, LLMAAVAVALVAGKPLGVLLA, WGGLLLTGLLAGIGFTMAIFI, and GVLLASGLAALLGLAWGWWLQ.

It belongs to the NhaA Na(+)/H(+) (TC 2.A.33) antiporter family.

It is found in the cell inner membrane. The catalysed reaction is Na(+)(in) + 2 H(+)(out) = Na(+)(out) + 2 H(+)(in). Functionally, na(+)/H(+) antiporter that extrudes sodium in exchange for external protons. This Acidovorax sp. (strain JS42) protein is Na(+)/H(+) antiporter NhaA.